Reading from the N-terminus, the 249-residue chain is Ribosomal RNA small subunit methyltransferase J (249 aa).

D169 is a binding site for S-adenosyl-L-methionine.

It belongs to the methyltransferase superfamily. RsmJ family.

The protein localises to the cytoplasm. The catalysed reaction is guanosine(1516) in 16S rRNA + S-adenosyl-L-methionine = N(2)-methylguanosine(1516) in 16S rRNA + S-adenosyl-L-homocysteine + H(+). In terms of biological role, specifically methylates the guanosine in position 1516 of 16S rRNA. The sequence is that of Ribosomal RNA small subunit methyltransferase J from Buchnera aphidicola subsp. Schizaphis graminum (strain Sg).